The primary structure comprises 152 residues: Protein Smg homolog (152 aa).

It belongs to the Smg family.

This chain is Protein Smg homolog, found in Nitrosomonas europaea (strain ATCC 19718 / CIP 103999 / KCTC 2705 / NBRC 14298).